Reading from the N-terminus, the 69-residue chain is Conotoxin Eb6.9 (69 aa).

An N-terminal signal peptide occupies residues 1-17 (VLIIAVLFLTACQLTTA). The propeptide occupies 18–41 (ETYSRGRQKHRARRSTDKNSKWTR). 3 disulfide bridges follow: Cys-43/Cys-57, Cys-50/Cys-61, and Cys-56/Cys-68.

The protein belongs to the conotoxin O1 superfamily. In terms of tissue distribution, expressed by the venom duct.

It localises to the secreted. The sequence is that of Conotoxin Eb6.9 (E1) from Conus ebraeus (Hebrew cone).